The primary structure comprises 156 residues: Ribosomal RNA large subunit methyltransferase H (156 aa).

S-adenosyl-L-methionine is bound by residues Leu-73, Gly-104, and Leu-123–Leu-128.

It belongs to the RNA methyltransferase RlmH family. Homodimer.

It localises to the cytoplasm. The enzyme catalyses pseudouridine(1915) in 23S rRNA + S-adenosyl-L-methionine = N(3)-methylpseudouridine(1915) in 23S rRNA + S-adenosyl-L-homocysteine + H(+). Its function is as follows. Specifically methylates the pseudouridine at position 1915 (m3Psi1915) in 23S rRNA. The polypeptide is Ribosomal RNA large subunit methyltransferase H (Colwellia psychrerythraea (strain 34H / ATCC BAA-681) (Vibrio psychroerythus)).